Consider the following 154-residue polypeptide: Large ribosomal subunit protein uL16 (154 aa).

The protein belongs to the universal ribosomal protein uL16 family. In terms of assembly, part of the 50S ribosomal subunit.

Functionally, binds 23S rRNA and is also seen to make contacts with the A and possibly P site tRNAs. In Synechococcus sp. (strain RCC307), this protein is Large ribosomal subunit protein uL16.